The chain runs to 564 residues: MFS-type efflux transporter ffsH (564 aa).

Basic and acidic residues predominate over residues 1 to 18; the sequence is MSEAEKKASQDAQHKEPM. Positions 1-37 are disordered; that stretch reads MSEAEKKASQDAQHKEPMADSETQLDSDSAPSSQAEK. Over residues 21-35 the composition is skewed to polar residues; it reads SETQLDSDSAPSSQA. The next 4 membrane-spanning stretches (helical) occupy residues 43 to 63, 98 to 118, 131 to 151, and 157 to 177; these read YPLS…ISAM, YVMI…GGAN, GIGA…LVPM, and FIGL…IIGG. A glycan (N-linked (GlcNAc...) asparagine) is linked at N182. Helical transmembrane passes span 187-207, 226-246, 254-274, 300-320, 334-354, 362-382, 389-409, 427-447, and 502-522; these read WVFY…VLFL, VVGN…LTYG, AANI…FIAW, FFIS…YPVY, VHLL…GGLV, PIHM…SVLT, AWAV…STTL, TWAY…AAIF, and VWLV…FEKE. A disordered region spans residues 540–564; that stretch reads GDAKGDVERGEGQNDSREGGQNENV. N-linked (GlcNAc...) asparagine glycosylation occurs at N553.

It belongs to the major facilitator superfamily.

The protein resides in the cell membrane. Its function is as follows. MFS-type efflux transporter; part of the gene cluster that mediates the biosynthesis of the cytotoxic leucine-containing cytochalasans, including aspochalasin C, aspochalasin E, TMC-169, flavichalasine F, aspergillin PZ, aspochalasin M and flavichalasine G. FfsH might be involved in the excretion of cytochalasans. The sequence is that of MFS-type efflux transporter ffsH from Aspergillus flavipes.